A 236-amino-acid polypeptide reads, in one-letter code: DNA repair protein RecO (236 aa).

It belongs to the RecO family.

Involved in DNA repair and RecF pathway recombination. In Photobacterium profundum (strain SS9), this protein is DNA repair protein RecO.